We begin with the raw amino-acid sequence, 105 residues long: Urease subunit beta (105 aa).

Belongs to the urease beta subunit family. As to quaternary structure, heterotrimer of UreA (gamma), UreB (beta) and UreC (alpha) subunits. Three heterotrimers associate to form the active enzyme.

Its subcellular location is the cytoplasm. It catalyses the reaction urea + 2 H2O + H(+) = hydrogencarbonate + 2 NH4(+). It participates in nitrogen metabolism; urea degradation; CO(2) and NH(3) from urea (urease route): step 1/1. This chain is Urease subunit beta, found in Marinobacter nauticus (strain ATCC 700491 / DSM 11845 / VT8) (Marinobacter aquaeolei).